Reading from the N-terminus, the 272-residue chain is Soluble interferon gamma receptor OPG193 (272 aa).

Residues 1 to 13 (MRYIIILAVLFIN) form the signal peptide. N-linked (GlcNAc...) asparagine; by host glycosylation is found at Asn42, Asn150, and Asn267.

This sequence belongs to the type II cytokine receptor family. In terms of assembly, homodimer. Interacts with host IFNG.

It is found in the secreted. In terms of biological role, counteracts the antiviral effects of host IFN-gamma. Acts as a soluble IFN-gamma receptor and thus inhibits the interaction between host IFN-gamma and its receptor. In Homo sapiens (Human), this protein is Soluble interferon gamma receptor OPG193 (OPG193).